A 323-amino-acid chain; its full sequence is tRNA U34 carboxymethyltransferase (323 aa).

Carboxy-S-adenosyl-L-methionine is bound by residues Lys91, Trp105, Lys110, Gly130, 152 to 154 (DPT), 181 to 182 (IE), Met196, Tyr200, and Arg315.

This sequence belongs to the class I-like SAM-binding methyltransferase superfamily. CmoB family. Homotetramer.

It carries out the reaction carboxy-S-adenosyl-L-methionine + 5-hydroxyuridine(34) in tRNA = 5-carboxymethoxyuridine(34) in tRNA + S-adenosyl-L-homocysteine + H(+). Functionally, catalyzes carboxymethyl transfer from carboxy-S-adenosyl-L-methionine (Cx-SAM) to 5-hydroxyuridine (ho5U) to form 5-carboxymethoxyuridine (cmo5U) at position 34 in tRNAs. The protein is tRNA U34 carboxymethyltransferase of Escherichia coli O8 (strain IAI1).